The sequence spans 215 residues: MGRRPAKCYRYCKNKAYPKSRYCRGVPEAKIRIYDCGMRKLNADTFPLTYHLISMEREQIGSEALEAARINANKYMIKNAGKEAYHIRVRVHPFHVCRINKMLSCAGADRLQQGMRGAFGKPNGLAARVRIGQPLMSIRVKPQHEAVVVAALKRASYKFAGRQVIAKSTMWGFTEIRSENYVKWKEEGKFRVDGVSTKILRNRGRLHRAKRVRAA.

Belongs to the universal ribosomal protein uL16 family. In terms of assembly, component of the small ribosomal subunit. Mature ribosomes consist of a small (40S) and a large (60S) subunit. The 40S subunit contains about 33 different proteins and 1 molecule of RNA (18S). The 60S subunit contains about 49 different proteins and 3 molecules of RNA (25S, 5.8S and 5S).

The protein is Large ribosomal subunit protein uL16 (RPL10) of Euglena gracilis.